An 87-amino-acid chain; its full sequence is Large ribosomal subunit protein eL33 (87 aa).

The protein belongs to the eukaryotic ribosomal protein eL33 family.

In Pyrococcus horikoshii (strain ATCC 700860 / DSM 12428 / JCM 9974 / NBRC 100139 / OT-3), this protein is Large ribosomal subunit protein eL33.